The primary structure comprises 362 residues: D-alanine--D-alanine ligase (362 aa).

Positions 141 to 346 (KNIFAEAGLN…YPELIEELIR (206 aa)) constitute an ATP-grasp domain. 174–229 (EEALGYPCFVKPANLGSSVGINKCKDREELEKAFEEAFQFDRKIIVEENIIGREVE) is a binding site for ATP. Mg(2+)-binding residues include aspartate 300, glutamate 313, and asparagine 315.

This sequence belongs to the D-alanine--D-alanine ligase family. Mg(2+) serves as cofactor. It depends on Mn(2+) as a cofactor.

The protein resides in the cytoplasm. It catalyses the reaction 2 D-alanine + ATP = D-alanyl-D-alanine + ADP + phosphate + H(+). Its pathway is cell wall biogenesis; peptidoglycan biosynthesis. Its function is as follows. Cell wall formation. This Bacillus cytotoxicus (strain DSM 22905 / CIP 110041 / 391-98 / NVH 391-98) protein is D-alanine--D-alanine ligase.